A 311-amino-acid polypeptide reads, in one-letter code: Forkhead box protein I2 (311 aa).

The segment at residues 99–193 (RPPYSYSALI…DNGNFRRKRR (95 aa)) is a DNA-binding region (fork-head). Disordered regions lie at residues 188–237 (FRRK…TTTC) and 263–294 (FSLRRPPPTAAAHSPQIPNTAPGFAPGHQTGA). Low complexity predominate over residues 219–231 (STPQDPQTSPSPS).

It localises to the nucleus. In terms of biological role, possible transcriptional activator. In Mus musculus (Mouse), this protein is Forkhead box protein I2.